The chain runs to 629 residues: DNA mismatch repair protein MutL (629 aa).

Belongs to the DNA mismatch repair MutL/HexB family.

Functionally, this protein is involved in the repair of mismatches in DNA. It is required for dam-dependent methyl-directed DNA mismatch repair. May act as a 'molecular matchmaker', a protein that promotes the formation of a stable complex between two or more DNA-binding proteins in an ATP-dependent manner without itself being part of a final effector complex. The chain is DNA mismatch repair protein MutL from Haemophilus influenzae (strain PittGG).